Reading from the N-terminus, the 220-residue chain is Dual specificity protein phosphatase 19 (220 aa).

N-acetylmethionine is present on Met-1. Residues 64–205 enclose the Tyrosine-protein phosphatase domain; the sequence is QVGVIKPWLL…LRTYQVGKES (142 aa). Catalysis depends on Cys-149, which acts as the Phosphocysteine intermediate.

This sequence belongs to the protein-tyrosine phosphatase family. Non-receptor class dual specificity subfamily.

The enzyme catalyses O-phospho-L-tyrosyl-[protein] + H2O = L-tyrosyl-[protein] + phosphate. The catalysed reaction is O-phospho-L-seryl-[protein] + H2O = L-seryl-[protein] + phosphate. It catalyses the reaction O-phospho-L-threonyl-[protein] + H2O = L-threonyl-[protein] + phosphate. Its activity is regulated as follows. Phosphatase activity is enhanced by Ca(2+) and Mn(2+). Has a dual specificity toward Ser/Thr and Tyr-containing proteins. This Mus musculus (Mouse) protein is Dual specificity protein phosphatase 19.